The primary structure comprises 291 residues: 4-hydroxy-tetrahydrodipicolinate synthase (291 aa).

Thr45 provides a ligand contact to pyruvate. Tyr131 serves as the catalytic Proton donor/acceptor. The Schiff-base intermediate with substrate role is filled by Lys159. Ile202 is a binding site for pyruvate.

Belongs to the DapA family. As to quaternary structure, homotetramer; dimer of dimers.

It is found in the cytoplasm. The catalysed reaction is L-aspartate 4-semialdehyde + pyruvate = (2S,4S)-4-hydroxy-2,3,4,5-tetrahydrodipicolinate + H2O + H(+). Its pathway is amino-acid biosynthesis; L-lysine biosynthesis via DAP pathway; (S)-tetrahydrodipicolinate from L-aspartate: step 3/4. In terms of biological role, catalyzes the condensation of (S)-aspartate-beta-semialdehyde [(S)-ASA] and pyruvate to 4-hydroxy-tetrahydrodipicolinate (HTPA). The protein is 4-hydroxy-tetrahydrodipicolinate synthase of Methanococcoides burtonii (strain DSM 6242 / NBRC 107633 / OCM 468 / ACE-M).